Here is a 179-residue protein sequence, read N- to C-terminus: Acireductone dioxygenase (179 aa).

Positions 97, 99, 103, and 141 each coordinate Fe(2+). Ni(2+) contacts are provided by histidine 97, histidine 99, glutamate 103, and histidine 141.

It belongs to the acireductone dioxygenase (ARD) family. As to quaternary structure, monomer. Fe(2+) serves as cofactor. Ni(2+) is required as a cofactor.

It carries out the reaction 1,2-dihydroxy-5-(methylsulfanyl)pent-1-en-3-one + O2 = 3-(methylsulfanyl)propanoate + CO + formate + 2 H(+). The enzyme catalyses 1,2-dihydroxy-5-(methylsulfanyl)pent-1-en-3-one + O2 = 4-methylsulfanyl-2-oxobutanoate + formate + 2 H(+). It functions in the pathway amino-acid biosynthesis; L-methionine biosynthesis via salvage pathway; L-methionine from S-methyl-5-thio-alpha-D-ribose 1-phosphate: step 5/6. Its function is as follows. Catalyzes 2 different reactions between oxygen and the acireductone 1,2-dihydroxy-3-keto-5-methylthiopentene (DHK-MTPene) depending upon the metal bound in the active site. Fe-containing acireductone dioxygenase (Fe-ARD) produces formate and 2-keto-4-methylthiobutyrate (KMTB), the alpha-ketoacid precursor of methionine in the methionine recycle pathway. Ni-containing acireductone dioxygenase (Ni-ARD) produces methylthiopropionate, carbon monoxide and formate, and does not lie on the methionine recycle pathway. The polypeptide is Acireductone dioxygenase (Gluconacetobacter diazotrophicus (strain ATCC 49037 / DSM 5601 / CCUG 37298 / CIP 103539 / LMG 7603 / PAl5)).